Reading from the N-terminus, the 319-residue chain is Transaldolase (319 aa).

Catalysis depends on Lys-131, which acts as the Schiff-base intermediate with substrate.

This sequence belongs to the transaldolase family. Type 1 subfamily. As to quaternary structure, homodimer.

The protein localises to the cytoplasm. The enzyme catalyses D-sedoheptulose 7-phosphate + D-glyceraldehyde 3-phosphate = D-erythrose 4-phosphate + beta-D-fructose 6-phosphate. Its pathway is carbohydrate degradation; pentose phosphate pathway; D-glyceraldehyde 3-phosphate and beta-D-fructose 6-phosphate from D-ribose 5-phosphate and D-xylulose 5-phosphate (non-oxidative stage): step 2/3. In terms of biological role, transaldolase is important for the balance of metabolites in the pentose-phosphate pathway. In Wigglesworthia glossinidia brevipalpis, this protein is Transaldolase.